Here is a 147-residue protein sequence, read N- to C-terminus: Deoxyuridine 5'-triphosphate nucleotidohydrolase (147 aa).

Substrate-binding positions include 67-69 (RSG), N80, and 84-86 (LID).

It belongs to the dUTPase family. Mg(2+) serves as cofactor.

It carries out the reaction dUTP + H2O = dUMP + diphosphate + H(+). Its pathway is pyrimidine metabolism; dUMP biosynthesis; dUMP from dCTP (dUTP route): step 2/2. Functionally, this enzyme is involved in nucleotide metabolism: it produces dUMP, the immediate precursor of thymidine nucleotides and it decreases the intracellular concentration of dUTP so that uracil cannot be incorporated into DNA. This chain is Deoxyuridine 5'-triphosphate nucleotidohydrolase, found in Gloeobacter violaceus (strain ATCC 29082 / PCC 7421).